We begin with the raw amino-acid sequence, 460 residues long: Elongation factor 1-alpha (460 aa).

Glycine 2 carries the n,N,N-trimethylglycine modification. The residue at position 3 (lysine 3) is an N6,N6-dimethyllysine; alternate. An N6-methyllysine; alternate modification is found at lysine 3. Residues 6-241 (KTHINVVVIG…DAIEPPKRPT (236 aa)) enclose the tr-type G domain. The interval 15–22 (GHVDSGKS) is G1. A GTP-binding site is contributed by 15–22 (GHVDSGKS). Lysine 31 is subject to N6-methyllysine. Positions 71–75 (GITID) are G2. The residue at position 80 (lysine 80) is an N6,N6,N6-trimethyllysine. A G3 region spans residues 92-95 (DAPG). GTP contacts are provided by residues 92-96 (DAPGH) and 154-157 (NKMD). The G4 stretch occupies residues 154 to 157 (NKMD). The interval 193-195 (SGF) is G5. Lysine 317 bears the N6,N6-dimethyllysine; alternate mark. Lysine 317 is modified (N6-methyllysine; alternate). Lysine 391 is subject to N6-methyllysine.

It belongs to the TRAFAC class translation factor GTPase superfamily. Classic translation factor GTPase family. EF-Tu/EF-1A subfamily.

It is found in the cytoplasm. In terms of biological role, this protein promotes the GTP-dependent binding of aminoacyl-tRNA to the A-site of ribosomes during protein biosynthesis. The sequence is that of Elongation factor 1-alpha (tef-1) from Neurospora crassa (strain ATCC 24698 / 74-OR23-1A / CBS 708.71 / DSM 1257 / FGSC 987).